Consider the following 71-residue polypeptide: Omega-conotoxin SO-3 (71 aa).

A signal peptide spans 1–22 (MKLTCMVIVAVLLLTACQLITA). Positions 23–45 (DDSRGTQKHRTLRSKTKLSMSTR) are excised as a propeptide. Intrachain disulfides connect Cys46–Cys61, Cys53–Cys65, and Cys60–Cys70. A Cysteine amide modification is found at Cys70.

It belongs to the conotoxin O1 superfamily. Expressed by the venom duct.

It localises to the secreted. Its function is as follows. Omega-conotoxins act at presynaptic membranes, they bind and block voltage-gated calcium channels (Cav). This peptide selectively targets Cav2.2/CACNA1B (IC(50)=160 nM) voltage-gated calcium channels. When tested in mammals, this toxin displays an analgesic potency similar to MVIIA in a range of acute and chronic pain models in rodents, but has less adverse effects (tremor, diminution of spontaneous locomotor activity and bad coordinated locomotion) compared with identical dosages of MVIIA injected intrathecally. The protein is Omega-conotoxin SO-3 of Conus striatus (Striated cone).